Consider the following 82-residue polypeptide: Small ribosomal subunit protein bS18 (82 aa).

The segment at 1 to 20 (MVDINQIPTRRPFHRRRKTC) is disordered.

It belongs to the bacterial ribosomal protein bS18 family. Part of the 30S ribosomal subunit. Forms a tight heterodimer with protein bS6.

In terms of biological role, binds as a heterodimer with protein bS6 to the central domain of the 16S rRNA, where it helps stabilize the platform of the 30S subunit. This Brucella abortus (strain 2308) protein is Small ribosomal subunit protein bS18.